We begin with the raw amino-acid sequence, 169 residues long: Small ribosomal subunit protein uS5 (169 aa).

Residues 14-77 (MKEQVVDIRR…QAAKKNLLLV (64 aa)) form the S5 DRBM domain.

Belongs to the universal ribosomal protein uS5 family. In terms of assembly, part of the 30S ribosomal subunit. Contacts proteins S4 and S8.

Functionally, with S4 and S12 plays an important role in translational accuracy. In terms of biological role, located at the back of the 30S subunit body where it stabilizes the conformation of the head with respect to the body. The sequence is that of Small ribosomal subunit protein uS5 from Alkaliphilus metalliredigens (strain QYMF).